The following is a 379-amino-acid chain: UDP-4-amino-4-deoxy-L-arabinose--oxoglutarate aminotransferase (379 aa).

K182 carries the N6-(pyridoxal phosphate)lysine modification.

This sequence belongs to the DegT/DnrJ/EryC1 family. ArnB subfamily. Homodimer. The cofactor is pyridoxal 5'-phosphate.

It catalyses the reaction UDP-4-amino-4-deoxy-beta-L-arabinose + 2-oxoglutarate = UDP-beta-L-threo-pentopyranos-4-ulose + L-glutamate. The protein operates within nucleotide-sugar biosynthesis; UDP-4-deoxy-4-formamido-beta-L-arabinose biosynthesis; UDP-4-deoxy-4-formamido-beta-L-arabinose from UDP-alpha-D-glucuronate: step 2/3. Its pathway is bacterial outer membrane biogenesis; lipopolysaccharide biosynthesis. Its function is as follows. Catalyzes the conversion of UDP-4-keto-arabinose (UDP-Ara4O) to UDP-4-amino-4-deoxy-L-arabinose (UDP-L-Ara4N). The modified arabinose is attached to lipid A and is required for resistance to polymyxin and cationic antimicrobial peptides. This Sodalis glossinidius (strain morsitans) protein is UDP-4-amino-4-deoxy-L-arabinose--oxoglutarate aminotransferase.